A 397-amino-acid polypeptide reads, in one-letter code: tRNA (guanine-N(7)-)-methyltransferase non-catalytic subunit wuho (397 aa).

WD repeat units follow at residues 75–115 (KVEV…AQLL), 163–202 (GHLS…DIHS), 206–244 (GHKE…ELLL), and 303–343 (AGTW…RASG).

This sequence belongs to the WD repeat TRM82 family. As to quaternary structure, forms a heterodimer with the catalytic subunit Mettl1. Interacts with mei-P26 and weakly interacts with bgcn; required for the function or formation of the mei-P26-bgcn-bam-sxl complex. Interacts with nanos; may be involved in mei-P26-dependent derepression of the BMP signaling pathway. Interacts with Myc; the interaction may be mediated by mei-P26 and may be involved in the regulation of ribosome biogenesis. In terms of tissue distribution, in testis, it is present at high level in hub cells, a niche for germline stem cells of testis. Ubiquitously expressed in all testicular cells throughout spermatogenesis. Ubiquitously expressed in all germline and somatic cells of the ovary.

The protein localises to the nucleus. It localises to the cytoplasm. Its pathway is tRNA modification; N(7)-methylguanine-tRNA biosynthesis. Functionally, required for the Mettl1-dependent formation of N(7)-methylguanine at position 46 (m7G46) in tRNA. In the Mettl1-wuho methyltransferase complex, it is required to stabilize and induce conformational changes of the catalytic subunit. Required for binding of nanos mRNA and repression of translation by the mei-P26-bgcn-bam-sxl complex. May cooperate with mei-P26 and nanos to derepress the BMP signaling pathway. May cooperate with mei-P26 to suppress expression of a subset of microRNAs. May cooperate with mei-P26 to regulate bam expression levels in germline cells during gametogenesis. Required to promote mitosis to meiosis transition during gametogenesis. May regulate germline cell division in part by regulating ribosome biogenesis. The polypeptide is tRNA (guanine-N(7)-)-methyltransferase non-catalytic subunit wuho (Drosophila persimilis (Fruit fly)).